Consider the following 473-residue polypeptide: Adenosylhomocysteinase (473 aa).

Substrate is bound by residues 58 to 62, Asp135, and Glu197; that span reads HMTIQ. 198–200 contributes to the NAD(+) binding site; sequence TTT. Substrate contacts are provided by Lys227 and Asp231. NAD(+)-binding positions include Asn232, Val265, Glu284, Asn319, 340-342, and Asn385; that span reads IGH. Residue His342 coordinates substrate. His392 contacts substrate. NAD(+) contacts are provided by Lys467 and Tyr471.

The protein belongs to the adenosylhomocysteinase family. As to quaternary structure, homotetramer; dimer of dimers. The cofactor is NAD(+).

The protein localises to the cytoplasm. The enzyme catalyses S-adenosyl-L-homocysteine + H2O = L-homocysteine + adenosine. It functions in the pathway amino-acid biosynthesis; L-homocysteine biosynthesis; L-homocysteine from S-adenosyl-L-homocysteine: step 1/1. Its function is as follows. May play a key role in the regulation of the intracellular concentration of adenosylhomocysteine, which is a strong inhibitor of SAM-dependent methyltransferases. Catalyzes the hydrolysis of S-adenosyl-L-homocysteine into L-homocysteine and adenosine. The protein is Adenosylhomocysteinase of Bradyrhizobium elkanii.